Consider the following 1001-residue polypeptide: Translation initiation factor IF-2 (1001 aa).

Residues 56 to 418 (PDYVHDPNAV…VEAGPPPISR (363 aa)) form a disordered region. The segment covering 70 to 84 (TEAHEERHEHEEAHE) has biased composition (basic and acidic residues). Over residues 85-108 (PAAAPKAAVEPETPVAPAPEAAPA) the composition is skewed to low complexity. The segment covering 109-120 (AKEERPAPEEPA) has biased composition (basic and acidic residues). Pro residues-rich tracts occupy residues 136 to 170 (IHPPVGATPPPRPEGPRAAPAPPLPPPAPQVPHAP), 180 to 194 (PARPEPPAHHPPSQT), 204 to 217 (RPAPPSAKPLPTTT), 229 to 252 (QPFPSSPAPGAPQRPQAIPRPPQQ), 305 to 322 (PAAPRPGVPKAPSAPVPG), and 345 to 357 (GMPPSRPGGPRPQ). A compositionally biased stretch (basic and acidic residues) spans 379–410 (SRGRPGDRRPVRQQRERTEEEKILRPQRRHVE). One can recognise a tr-type G domain in the interval 499–668 (RRAPVVTIMG…LLVADMQDLK (170 aa)). Positions 508–515 (GHVDHGKT) are G1. A GTP-binding site is contributed by 508-515 (GHVDHGKT). The tract at residues 533–537 (GITQH) is G2. Residues 554–557 (DTPG) are G3. GTP-binding positions include 554-558 (DTPGH) and 608-611 (NKID). The interval 608–611 (NKID) is G4. Residues 644–646 (SAR) form a G5 region.

This sequence belongs to the TRAFAC class translation factor GTPase superfamily. Classic translation factor GTPase family. IF-2 subfamily.

The protein localises to the cytoplasm. Functionally, one of the essential components for the initiation of protein synthesis. Protects formylmethionyl-tRNA from spontaneous hydrolysis and promotes its binding to the 30S ribosomal subunits. Also involved in the hydrolysis of GTP during the formation of the 70S ribosomal complex. This chain is Translation initiation factor IF-2, found in Solibacter usitatus (strain Ellin6076).